Here is a 201-residue protein sequence, read N- to C-terminus: Achaete-scute complex protein T5 (201 aa).

Positions 1–10 are enriched in polar residues; that stretch reads MALGSENHSV. The interval 1 to 32 is disordered; it reads MALGSENHSVFNDDEESSSAFNGPSVIRRNAR. The bHLH domain maps to 24-90; the sequence is PSVIRRNARE…KMAVEYIRRL (67 aa).

As to quaternary structure, efficient DNA binding requires dimerization with another bHLH protein. As to expression, l(1)SC, SC and AC strongly label the presumptive stomatogastric nervous system, while ASE is more prominent in the presumptive procephalic lobe.

In terms of biological role, AS-C proteins are involved in the determination of the neuronal precursors in the peripheral nervous system and the central nervous system. This is Achaete-scute complex protein T5 (ac) from Drosophila melanogaster (Fruit fly).